The following is a 211-amino-acid chain: uncharacterized protein (211 aa).

This is an uncharacterized protein from Methanocaldococcus jannaschii (strain ATCC 43067 / DSM 2661 / JAL-1 / JCM 10045 / NBRC 100440) (Methanococcus jannaschii).